Here is a 226-residue protein sequence, read N- to C-terminus: Protein-L-isoaspartate(D-aspartate) O-methyltransferase (226 aa).

Residues valine 57–serine 60, histidine 65, serine 89, glutamate 115–histidine 116, aspartate 147–glycine 148, and threonine 222 each bind S-adenosyl-L-homocysteine. The active site involves serine 60.

The protein belongs to the methyltransferase superfamily. L-isoaspartyl/D-aspartyl protein methyltransferase family. Monomer.

Its subcellular location is the cytoplasm. It is found in the cytosol. The catalysed reaction is [protein]-L-isoaspartate + S-adenosyl-L-methionine = [protein]-L-isoaspartate alpha-methyl ester + S-adenosyl-L-homocysteine. Its function is as follows. Initiates the repair of damaged proteins by catalyzing methyl esterification of L-isoaspartyl and D-aspartyl residues produced by spontaneous isomerization and racemization of L-aspartyl and L-asparaginyl residues in aging peptides and proteins. The polypeptide is Protein-L-isoaspartate(D-aspartate) O-methyltransferase (Pcmt) (Drosophila melanogaster (Fruit fly)).